A 445-amino-acid chain; its full sequence is Phosphoglucosamine mutase (445 aa).

S99 serves as the catalytic Phosphoserine intermediate. Mg(2+) contacts are provided by S99, D242, D244, and D246. S99 is subject to Phosphoserine.

It belongs to the phosphohexose mutase family. The cofactor is Mg(2+). Post-translationally, activated by phosphorylation.

It catalyses the reaction alpha-D-glucosamine 1-phosphate = D-glucosamine 6-phosphate. In terms of biological role, catalyzes the conversion of glucosamine-6-phosphate to glucosamine-1-phosphate. The polypeptide is Phosphoglucosamine mutase (Helicobacter pylori (strain G27)).